Here is a 550-residue protein sequence, read N- to C-terminus: MFCVQCEQTIRTPAGNGCSYAQGMCGKTAETSDLQDLLIAALQGLSAWAVKAREYGIINHDVDNFAPRSFFSTLTNVNFDSPRIVGYAREAIALREALKAQCLSVDANAHCDNPMADLQLVSDDLGELQRQAAEFTPNKDKAAIGENILGLRLLCLYGLKGAAAYMEHAHVLGQYDNDIYAQYHKIMAWLGTWPADMNALLECAMEIGQMNFKVMSILDAGETTKYGHPTPTQVNVKATEGKCILISGHDLKDLYNLLEQTEGTGVNVYTHGEMLPAHGYPELRKFKHLVGNYGSGWQNQQVEFARFPGPIVMTSNCIIDPTVGSYDDRIWTRSIVGWPGVSHLEGDDFGPVIAQAQQMAGFPYSEIPHLITVGFGRQTLLGAADTLIDLVSREKLRHIFLVGGCDGARGERNYFTDFATSVPDDCLILTLACGKYRFNKLEFGDIEGLPRLVDAGQCNDAYSAIILAVTLAEKLGCGVNDLPLSLVLSWFEQKAIVILLTLLSLGVKNIVTGPTAPGFFTPDLLAVLNEKFGLRSVTTVEEDMKQLLSA.

Residues Cys3, Cys6, Cys18, and Cys25 each contribute to the [2Fe-2S] cluster site. His249, Glu273, Cys317, Cys405, Cys433, Cys458, Glu492, and Lys494 together coordinate hybrid [4Fe-2O-2S] cluster. At Cys405 the chain carries Cysteine persulfide.

Belongs to the HCP family. [2Fe-2S] cluster serves as cofactor. It depends on hybrid [4Fe-2O-2S] cluster as a cofactor.

Its subcellular location is the cytoplasm. The enzyme catalyses A + NH4(+) + H2O = hydroxylamine + AH2 + H(+). Catalyzes the reduction of hydroxylamine to form NH(3) and H(2)O. The chain is Hydroxylamine reductase from Salmonella gallinarum (strain 287/91 / NCTC 13346).